A 184-amino-acid chain; its full sequence is MKNLKKLIIITGPSGVGKGTVIKELLDRNKDIWLSISATTRNPRVGEKDDLNYYFIGEERFKDMIDKKEFLEWAQFAGNYYGTPLSTVNEKIEKGFIVLLEIEVEGAKQIKEKFPESLSIFLLPPSKEELEKRIRNRGTEKEEAIDRRLSRANYEIASSNQFDFVLTNHDVDETVKEVLKIIKS.

Residues 5-183 (KKLIIITGPS…TVKEVLKIIK (179 aa)) form the Guanylate kinase-like domain. Position 12-19 (12-19 (GPSGVGKG)) interacts with ATP.

Belongs to the guanylate kinase family.

The protein resides in the cytoplasm. The catalysed reaction is GMP + ATP = GDP + ADP. In terms of biological role, essential for recycling GMP and indirectly, cGMP. The chain is Guanylate kinase from Prochlorococcus marinus subsp. pastoris (strain CCMP1986 / NIES-2087 / MED4).